The following is a 547-amino-acid chain: Chaperonin GroEL 2 (547 aa).

ATP-binding positions include 29-32, 86-90, Gly418, 482-484, and Asp498; these read TLGP, DGTTT, and NAA.

Belongs to the chaperonin (HSP60) family. Forms a cylinder of 14 subunits composed of two heptameric rings stacked back-to-back. Interacts with the co-chaperonin GroES.

The protein resides in the cytoplasm. The catalysed reaction is ATP + H2O + a folded polypeptide = ADP + phosphate + an unfolded polypeptide.. In terms of biological role, together with its co-chaperonin GroES, plays an essential role in assisting protein folding. The GroEL-GroES system forms a nano-cage that allows encapsulation of the non-native substrate proteins and provides a physical environment optimized to promote and accelerate protein folding. In Corynebacterium efficiens (strain DSM 44549 / YS-314 / AJ 12310 / JCM 11189 / NBRC 100395), this protein is Chaperonin GroEL 2.